Here is a 103-residue protein sequence, read N- to C-terminus: Small ribosomal subunit protein uS10 (103 aa).

Belongs to the universal ribosomal protein uS10 family. In terms of assembly, part of the 30S ribosomal subunit.

Involved in the binding of tRNA to the ribosomes. The protein is Small ribosomal subunit protein uS10 of Borrelia recurrentis (strain A1).